A 184-amino-acid chain; its full sequence is Ribose 1,5-bisphosphate phosphokinase PhnN (184 aa).

11 to 18 contributes to the ATP binding site; that stretch reads GPSGAGKD.

The protein belongs to the ribose 1,5-bisphosphokinase family.

The catalysed reaction is alpha-D-ribose 1,5-bisphosphate + ATP = 5-phospho-alpha-D-ribose 1-diphosphate + ADP. It functions in the pathway metabolic intermediate biosynthesis; 5-phospho-alpha-D-ribose 1-diphosphate biosynthesis; 5-phospho-alpha-D-ribose 1-diphosphate from D-ribose 5-phosphate (route II): step 3/3. Its function is as follows. Catalyzes the phosphorylation of ribose 1,5-bisphosphate to 5-phospho-D-ribosyl alpha-1-diphosphate (PRPP). This Burkholderia mallei (strain SAVP1) protein is Ribose 1,5-bisphosphate phosphokinase PhnN.